Consider the following 254-residue polypeptide: Imidazole glycerol phosphate synthase subunit HisF (254 aa).

Residues D13 and D132 contribute to the active site.

Belongs to the HisA/HisF family. Heterodimer of HisH and HisF.

Its subcellular location is the cytoplasm. It catalyses the reaction 5-[(5-phospho-1-deoxy-D-ribulos-1-ylimino)methylamino]-1-(5-phospho-beta-D-ribosyl)imidazole-4-carboxamide + L-glutamine = D-erythro-1-(imidazol-4-yl)glycerol 3-phosphate + 5-amino-1-(5-phospho-beta-D-ribosyl)imidazole-4-carboxamide + L-glutamate + H(+). Its pathway is amino-acid biosynthesis; L-histidine biosynthesis; L-histidine from 5-phospho-alpha-D-ribose 1-diphosphate: step 5/9. In terms of biological role, IGPS catalyzes the conversion of PRFAR and glutamine to IGP, AICAR and glutamate. The HisF subunit catalyzes the cyclization activity that produces IGP and AICAR from PRFAR using the ammonia provided by the HisH subunit. The sequence is that of Imidazole glycerol phosphate synthase subunit HisF from Nautilia profundicola (strain ATCC BAA-1463 / DSM 18972 / AmH).